The chain runs to 417 residues: Arginine biosynthesis bifunctional protein ArgJ (417 aa).

6 residues coordinate substrate: Thr-162, Lys-188, Thr-199, Glu-289, Asn-412, and Ser-417. Catalysis depends on Thr-199, which acts as the Nucleophile.

This sequence belongs to the ArgJ family. In terms of assembly, heterotetramer of two alpha and two beta chains.

It is found in the cytoplasm. It carries out the reaction N(2)-acetyl-L-ornithine + L-glutamate = N-acetyl-L-glutamate + L-ornithine. It catalyses the reaction L-glutamate + acetyl-CoA = N-acetyl-L-glutamate + CoA + H(+). It participates in amino-acid biosynthesis; L-arginine biosynthesis; L-ornithine and N-acetyl-L-glutamate from L-glutamate and N(2)-acetyl-L-ornithine (cyclic): step 1/1. It functions in the pathway amino-acid biosynthesis; L-arginine biosynthesis; N(2)-acetyl-L-ornithine from L-glutamate: step 1/4. Catalyzes two activities which are involved in the cyclic version of arginine biosynthesis: the synthesis of N-acetylglutamate from glutamate and acetyl-CoA as the acetyl donor, and of ornithine by transacetylation between N(2)-acetylornithine and glutamate. This is Arginine biosynthesis bifunctional protein ArgJ from Nitrobacter winogradskyi (strain ATCC 25391 / DSM 10237 / CIP 104748 / NCIMB 11846 / Nb-255).